We begin with the raw amino-acid sequence, 260 residues long: Recombination-promoting nuclease RpnD (260 aa).

This sequence belongs to the Rpn/YhgA-like nuclease family.

In terms of biological role, a low activity DNA endonuclease probably yielding 3'-hydroxyl ends. Involved in RecA-independent recombination and horizontal gene transfer. The polypeptide is Recombination-promoting nuclease RpnD (rpnD) (Escherichia coli O157:H7).